A 353-amino-acid polypeptide reads, in one-letter code: MAGNTIGKVFRVTTFGESHGTALGCVIDGMPPGLELSSDDLQYDLNRRRPGTSRYTTQRSELDEVQILSGVFKGTTTGTSIGLVIQNKDQRSQDYSEIKDLFRPGHADYTYEKKYGIRDYRGGGRSSARETAMRVAAGSIAKKYLKIQTGIVIRAYLSAMGDIKCPFESWEEVEQNPFFCSNKNKVFQLEELIKKLKKTGDSIGAEITIIAQNVPVGFGEPVFDRLDADLAHALMSINAAKGVEIGDGFSVVNQKGSENRDEMTPNGFKSNHCGGILGGISNGENIFLKVAFKPTSSIRQSGNTINKNNEKVKIVIKGRHDPCVGIRAVPIAEAMVAIVLMDHLLRFRAQCAK.

The NADP(+) site is built by Arg48 and Arg54. Residues 125 to 127 (RSS), 238 to 239 (NA), Gly278, 293 to 297 (KPTSS), and Arg319 contribute to the FMN site.

It belongs to the chorismate synthase family. Homotetramer. FMNH2 serves as cofactor.

It catalyses the reaction 5-O-(1-carboxyvinyl)-3-phosphoshikimate = chorismate + phosphate. Its pathway is metabolic intermediate biosynthesis; chorismate biosynthesis; chorismate from D-erythrose 4-phosphate and phosphoenolpyruvate: step 7/7. Functionally, catalyzes the anti-1,4-elimination of the C-3 phosphate and the C-6 proR hydrogen from 5-enolpyruvylshikimate-3-phosphate (EPSP) to yield chorismate, which is the branch point compound that serves as the starting substrate for the three terminal pathways of aromatic amino acid biosynthesis. This reaction introduces a second double bond into the aromatic ring system. The protein is Chorismate synthase of Buchnera aphidicola subsp. Schizaphis graminum (strain Sg).